A 514-amino-acid polypeptide reads, in one-letter code: 1-pyrroline-5-carboxylate dehydrogenase (514 aa).

Catalysis depends on residues Glu-286 and Cys-320.

It belongs to the aldehyde dehydrogenase family. RocA subfamily.

It catalyses the reaction L-glutamate 5-semialdehyde + NAD(+) + H2O = L-glutamate + NADH + 2 H(+). It functions in the pathway amino-acid degradation; L-proline degradation into L-glutamate; L-glutamate from L-proline: step 2/2. The polypeptide is 1-pyrroline-5-carboxylate dehydrogenase (Staphylococcus saprophyticus subsp. saprophyticus (strain ATCC 15305 / DSM 20229 / NCIMB 8711 / NCTC 7292 / S-41)).